The following is a 241-amino-acid chain: Chromosome partition protein MukE (241 aa).

The segment at 207–241 (DGEAATPDSLSQEKSAVKNDEEIEDELDEGLGEEE) is disordered. Over residues 227-241 (EEIEDELDEGLGEEE) the composition is skewed to acidic residues.

Belongs to the MukE family. As to quaternary structure, interacts, and probably forms a ternary complex, with MukF and MukB. The complex formation is stimulated by calcium or magnesium.

Its subcellular location is the cytoplasm. The protein resides in the nucleoid. In terms of biological role, involved in chromosome condensation, segregation and cell cycle progression. May participate in facilitating chromosome segregation by condensation DNA from both sides of a centrally located replisome during cell division. Probably acts via its interaction with MukB and MukF. In Mannheimia succiniciproducens (strain KCTC 0769BP / MBEL55E), this protein is Chromosome partition protein MukE.